The primary structure comprises 219 residues: Ribonuclease T (219 aa).

In terms of domain architecture, Exonuclease spans 20 to 194; that stretch reads VVIDIETAGF…YDSLQTANLF (175 aa). Residues D23, E25, H181, and D186 each contribute to the Mg(2+) site. The active-site Proton donor/acceptor is H181.

It belongs to the RNase T family. In terms of assembly, homodimer. The cofactor is Mg(2+).

Functionally, trims short 3' overhangs of a variety of RNA species, leaving a one or two nucleotide 3' overhang. Responsible for the end-turnover of tRNA: specifically removes the terminal AMP residue from uncharged tRNA (tRNA-C-C-A). Also appears to be involved in tRNA biosynthesis. The chain is Ribonuclease T from Buchnera aphidicola subsp. Schizaphis graminum (strain Sg).